We begin with the raw amino-acid sequence, 987 residues long: MSAQSLLHSVFSCSSPASGGTASAKGFSKRKLRQTRSLDPALIGGCGSEMGAEGGLRGSTVSRLHSPQLLAEGLGSRLASSPRSQHLRATRFQTPRPLCSSFSTPSTPQEKSPSGSFHFDYEVPLSRSGLKKSMAWDLPSVLAGSGSASSRSPASILSSSGGGPNGIFSSPRRWLQQRKFQPPPNSRSHPYVVWRSEGDFTWNSMSGRSVRLRSVPIQSLSELERARLQEVAFYQLQQDCDLGCQITIPKDGQKRKKSLRKKLDSLGKEKNKDKEFIPQAFGMPLSQVIANDRAYKLKQDLQREEQKDASSDFVSSLLPFGNKKQNKELSSSNSSLSSTSETPNESTSPNTPEPAPRARRRGAMSVDSITDLDDNQSRLLEALQLSLPAEAQSKKEKARDKKLSLNPIYRQVPRLVDSCCQHLEKHGLQTVGIFRVGSSKKRVRQLREEFDRGVDVCLEEEHSVHDVAALLKEFLRDMPDPLLTRELYTAFINTLLLEPEEQLGTLQLLIYLLPPCNCDTLHRLLQFLSIVARHADDNVSKDGQEVTGNKMTSLNLATIFGPNLLHKQKSSDKEYSVQSSARAEESTAIIAVVQKMIENYEALFMVPPDLQNEVLISLLETDPDVVDYLLRRKASQSSSPDILQTEVSFSMGGRHSSTDSNKASSGDISPYDNNSPVLSERSLLAMQEDRARGGSEKLYKVPEQYTLVGHLSSPKSKSRESSPGPRLGKEMSEEPFNIWGTWHSTLKSGSKDPGMTGSYGDIFESSSLRPRPCSLSQGNLSLNWPRCQGSPTGLDSGTQVIRRTQTAATVEQCSVHLPVSRVCSTPHIQDGSRGTRRPAASSDPFLSLNSTEDLAEGKEDVAWLQSQARPVYQRPQESGKDDRRPPPPYPGSGKPATTSAQLPLEPPLWRLQRHEEGSETAVEGGQQASGEHQTRPKKLSSAYSLSASEQDKQNLGEASWLDWQRERWQIWELLSTDNPDALPETLV.

Positions 1–21 (MSAQSLLHSVFSCSSPASGGT) are enriched in polar residues. 3 disordered regions span residues 1–60 (MSAQ…RGST), 76–117 (SRLA…SGSF), and 144–170 (GSGS…IFSS). A Phosphoserine modification is found at Ser-37. A compositionally biased stretch (gly residues) spans 44 to 57 (GGCGSEMGAEGGLR). Residues 100 to 115 (SSFSTPSTPQEKSPSG) show a composition bias toward polar residues. Residues 144–159 (GSGSASSRSPASILSS) are compositionally biased toward low complexity. Ser-265 carries the phosphoserine modification. Residues 324 to 363 (KQNKELSSSNSSLSSTSETPNESTSPNTPEPAPRARRRGA) are disordered. The segment covering 328–350 (ELSSSNSSLSSTSETPNESTSPN) has biased composition (low complexity). Positions 344-354 (NESTSPNTPEP) match the SH3-binding motif. Ser-365 carries the post-translational modification Phosphoserine. One can recognise a Rho-GAP domain in the interval 403 to 604 (LSLNPIYRQV…KMIENYEALF (202 aa)). Positions 641–676 (DILQTEVSFSMGGRHSSTDSNKASSGDISPYDNNSP) are disordered. The span at 658 to 676 (TDSNKASSGDISPYDNNSP) shows a compositional bias: polar residues. Residues Ser-669, Ser-675, Ser-682, Ser-713, Ser-758, Ser-776, Ser-781, Ser-790, and Ser-824 each carry the phosphoserine modification. The tract at residues 709 to 731 (GHLSSPKSKSRESSPGPRLGKEM) is disordered. Disordered regions lie at residues 825 to 847 (TPHI…PFLS) and 863 to 953 (WLQS…QDKQ). Low complexity predominate over residues 939 to 948 (LSSAYSLSAS). 2 positions are modified to phosphoserine: Ser-941 and Ser-944.

Expressed in retina and lung.

The protein localises to the cytoplasm. GTPase activator for the Rho-type GTPases by converting them to an inactive GDP-bound state. Could regulate the interactions of signaling molecules with the actin cytoskeleton. Promotes continuous elongation of cytoplasmic processes during cell motility and simultaneous retraction of the cell body changing the cell morphology. This chain is Rho GTPase-activating protein 6 (Arhgap6), found in Mus musculus (Mouse).